The chain runs to 313 residues: B3 domain-containing protein At2g31720 (313 aa).

The disordered stretch occupies residues 80–110; the sequence is KNQDPEQNPNRVASSPSSCHLESKRPQKVVS. Polar residues predominate over residues 84-99; the sequence is PEQNPNRVASSPSSCH. Positions 169–267 form a DNA-binding region, TF-B3; sequence WKQILDMDFL…MLFFAFVLSD (99 aa).

It localises to the nucleus. The protein is B3 domain-containing protein At2g31720 (ARF70) of Arabidopsis thaliana (Mouse-ear cress).